The following is a 110-amino-acid chain: Nucleoid-associated protein bbp_426 (110 aa).

This sequence belongs to the YbaB/EbfC family. Homodimer.

It is found in the cytoplasm. The protein resides in the nucleoid. Binds to DNA and alters its conformation. May be involved in regulation of gene expression, nucleoid organization and DNA protection. This Buchnera aphidicola subsp. Baizongia pistaciae (strain Bp) protein is Nucleoid-associated protein bbp_426.